Consider the following 904-residue polypeptide: MESNSGEIEELPPPPPLPPNAEPIKTDDTKKLSKPKRALMARSGCGKKGQPIQLLTNHFKVSLKAADEFFHHYYVNLKYEDDRPVDGKGIGRKVLDKLQQTYASELANKDFAYDGEKSLFTIGALPQVNNEFTVVLEDFNTGKSSANGGSPGNDSPGNDRKRVRRPYQTKTFKVELNFAAKIPMSAIAQALRGQESENTQEAIRVIDIILRQHSAKQGCLLVRQSFFHNNPSNFVDLGGGVMGCRGFHSSFRATQSGLSLNIDVSTTMIVKPGPVVDFLLANQKVDHPNKIDWAKAKRALKNLRIKTSPANTEYKIVGLSERNCYEQMFTLKQRNGDGEPEGVEVSVYEYFVKNRGIELRYSGDFPCINVGKPKRPTYFPIELCSLVPLQRYTKALSTLQRSSLVEKSRQKPEERMSVLSDVLKRSNYDSEPMLNSCGISIARGFTQVAGRVLQAPKLKAGNGEDLFARNGRWNFNNKRLIKASSIEKWAVVNFSARCNIRDLVRDIIKCGGMKGIKVEDPFDVIEEDPSMRRAPAARRVDGMIDKMQKKLPGQPKFLLCVLAERKNSDIYGPWKRKCLAEFGIITQCVAPTRVNDQYITNVLLKINAKLGGLNSLLQIETSPSIPLVSKVPTIILGMDVSHGSPGQSDIPSIAAVVSSREWPLVSKYRASVRSQSPKLEMIDGLFKPQGAQEDDGLIRELLVDFYTSTGKRKPDQVIIFRDGVSESQFTQVLNIELDQIIEACKFLDENWSPKFTLIVAQKNHHTKFFVPGSQNNVPPGTVVDNAVCHPRNNDFYMCAHAGMIGTTRPTHYHILHDEIGFSADDLQELVHSLSYVYQRSTTAISVVAPICYAHLAAAQVSQFIKFDEMSETSSSHGGHTSAGSAPVPELPRLHNKVRSSMFFC.

Disordered regions lie at residues 1–33 (MESN…KKLS) and 143–166 (KSSA…VRRP). Over residues 11–21 (LPPPPPLPPNA) the composition is skewed to pro residues. The segment covering 144–156 (SSANGGSPGNDSP) has biased composition (low complexity). The PAZ domain occupies 274 to 388 (PVVDFLLANQ…FPIELCSLVP (115 aa)). The Piwi domain occupies 557 to 865 (FLLCVLAERK…AAAQVSQFIK (309 aa)). Residues 871-890 (ETSSSHGGHTSAGSAPVPEL) form a disordered region. The span at 872 to 885 (TSSSHGGHTSAGSA) shows a compositional bias: low complexity.

This sequence belongs to the argonaute family. Ago subfamily.

In terms of biological role, probably involved in the RNA silencing pathway. May bind to short RNAs such as microRNAs (miRNAs) or short interfering RNAs (siRNAs), and represses the translation of mRNAs which are complementary to them. The protein is Protein argonaute 4A (AGO4A) of Oryza sativa subsp. japonica (Rice).